Reading from the N-terminus, the 565-residue chain is Urocanate hydratase (565 aa).

Residues 61–62 (GG), Q139, 185–187 (GMG), E205, R210, 251–252 (NA), 272–276 (QTSAH), 282–283 (YL), and Y331 each bind NAD(+). C419 is a catalytic residue. The interval 453-472 (LDSGSVASPNRETESMRDGS) is disordered. A compositionally biased stretch (basic and acidic residues) spans 463-472 (RETESMRDGS). G501 serves as a coordination point for NAD(+).

Belongs to the urocanase family. The cofactor is NAD(+).

The protein resides in the cytoplasm. It catalyses the reaction 4-imidazolone-5-propanoate = trans-urocanate + H2O. The protein operates within amino-acid degradation; L-histidine degradation into L-glutamate; N-formimidoyl-L-glutamate from L-histidine: step 2/3. Functionally, catalyzes the conversion of urocanate to 4-imidazolone-5-propionate. In Pseudomonas syringae pv. syringae (strain B728a), this protein is Urocanate hydratase.